The chain runs to 122 residues: uncharacterized protein (122 aa).

A run of 2 helical transmembrane segments spans residues 43 to 63 and 76 to 96; these read PIII…IFFI and AVAD…ILYF.

The protein resides in the membrane. This is an uncharacterized protein from Schizosaccharomyces pombe (strain 972 / ATCC 24843) (Fission yeast).